The chain runs to 204 residues: Holliday junction branch migration complex subunit RuvA (204 aa).

Residues 1–65 form a domain I region; that stretch reads MIGRLRGAVA…SAGLRLYGFG (65 aa). Residues 66–142 form a domain II region; the sequence is TREDRRAFVL…PITDGPVLMT (77 aa). The segment at 143-152 is flexible linker; that stretch reads APGAVAAAPA. Residues 152-204 form a domain III region; that stretch reads AKAAPTGDAVAALMGLGVAEVNARRVVEAAAAKLGDEATVQALIKAGLQELGR.

It belongs to the RuvA family. In terms of assembly, homotetramer. Forms an RuvA(8)-RuvB(12)-Holliday junction (HJ) complex. HJ DNA is sandwiched between 2 RuvA tetramers; dsDNA enters through RuvA and exits via RuvB. An RuvB hexamer assembles on each DNA strand where it exits the tetramer. Each RuvB hexamer is contacted by two RuvA subunits (via domain III) on 2 adjacent RuvB subunits; this complex drives branch migration. In the full resolvosome a probable DNA-RuvA(4)-RuvB(12)-RuvC(2) complex forms which resolves the HJ.

It is found in the cytoplasm. Its function is as follows. The RuvA-RuvB-RuvC complex processes Holliday junction (HJ) DNA during genetic recombination and DNA repair, while the RuvA-RuvB complex plays an important role in the rescue of blocked DNA replication forks via replication fork reversal (RFR). RuvA specifically binds to HJ cruciform DNA, conferring on it an open structure. The RuvB hexamer acts as an ATP-dependent pump, pulling dsDNA into and through the RuvAB complex. HJ branch migration allows RuvC to scan DNA until it finds its consensus sequence, where it cleaves and resolves the cruciform DNA. This Caulobacter sp. (strain K31) protein is Holliday junction branch migration complex subunit RuvA.